A 638-amino-acid chain; its full sequence is Zinc finger protein 143 (638 aa).

Met1 carries the N-acetylmethionine modification. Residue Lys213 forms a Glycyl lysine isopeptide (Lys-Gly) (interchain with G-Cter in SUMO2) linkage. 4 consecutive C2H2-type zinc fingers follow at residues 237–261, 267–291, 297–321, and 327–351; these read FRCK…ERSH, YQCE…FRTH, YRCS…IRTH, and FKCP…IRTH. Thr352 is modified (phosphothreonine). 3 consecutive C2H2-type zinc fingers follow at residues 357–381, 387–411, and 417–440; these read YYCT…VRIH, YVCT…HVVH, and YNCN…RTAH. Lys406 is covalently cross-linked (Glycyl lysine isopeptide (Lys-Gly) (interchain with G-Cter in SUMO2)).

It belongs to the GLI C2H2-type zinc-finger protein family. As to quaternary structure, interacts with CHD8. Forms a complex with HCFC1 and ZNF143.

Its subcellular location is the nucleus. Its function is as follows. Transcriptional activator. In complex with HCFC1 and ZNF143, regulates the expression of several genes, including AP2S1, ESCO2, OPHN1, RBL1, UBXN8 and ZNF32. Activates the gene for selenocysteine tRNA (tRNAsec). Binds to the SPH motif of small nuclear RNA (snRNA) gene promoters. Participates in efficient U6 RNA polymerase III transcription via its interaction with CHD8. This chain is Zinc finger protein 143 (Znf143), found in Rattus norvegicus (Rat).